The following is a 359-amino-acid chain: Peptide chain release factor 1 (359 aa).

Gln-236 carries the N5-methylglutamine modification.

The protein belongs to the prokaryotic/mitochondrial release factor family. In terms of processing, methylated by PrmC. Methylation increases the termination efficiency of RF1.

It is found in the cytoplasm. Peptide chain release factor 1 directs the termination of translation in response to the peptide chain termination codons UAG and UAA. The chain is Peptide chain release factor 1 from Ureaplasma parvum serovar 3 (strain ATCC 27815 / 27 / NCTC 11736).